The primary structure comprises 338 residues: D-erythrose-4-phosphate dehydrogenase (338 aa).

Residue 11 to 12 (RI) coordinates NAD(+). Residues 153-155 (SCT), Arg199, 212-213 (TK), and Arg235 each bind substrate. The active-site Nucleophile is the Cys154. Residue Asn317 participates in NAD(+) binding.

This sequence belongs to the glyceraldehyde-3-phosphate dehydrogenase family. Epd subfamily. As to quaternary structure, homotetramer.

It localises to the cytoplasm. The catalysed reaction is D-erythrose 4-phosphate + NAD(+) + H2O = 4-phospho-D-erythronate + NADH + 2 H(+). The protein operates within cofactor biosynthesis; pyridoxine 5'-phosphate biosynthesis; pyridoxine 5'-phosphate from D-erythrose 4-phosphate: step 1/5. Functionally, catalyzes the NAD-dependent conversion of D-erythrose 4-phosphate to 4-phosphoerythronate. The chain is D-erythrose-4-phosphate dehydrogenase from Shewanella piezotolerans (strain WP3 / JCM 13877).